The chain runs to 311 residues: Malate dehydrogenase (311 aa).

NAD(+)-binding positions include 7 to 13 (GAAGGIG) and Asp-34. Substrate is bound by residues Arg-81 and Arg-87. NAD(+)-binding positions include Asn-94 and 117-119 (ITN). Substrate-binding residues include Asn-119 and Arg-153. The active-site Proton acceptor is the His-177. Met-227 contacts NAD(+).

It belongs to the LDH/MDH superfamily. MDH type 1 family. Homodimer.

The enzyme catalyses (S)-malate + NAD(+) = oxaloacetate + NADH + H(+). Catalyzes the reversible oxidation of malate to oxaloacetate. This chain is Malate dehydrogenase, found in Haemophilus influenzae (strain 86-028NP).